Here is an 89-residue protein sequence, read N- to C-terminus: Venom peptide BmKAPI (89 aa).

The signal sequence occupies residues 1 to 22 (MKFVFASFALFVIFLCFSQSLS). 5 disulfides stabilise this stretch: cysteine 28-cysteine 66, cysteine 37-cysteine 62, cysteine 41-cysteine 55, cysteine 46-cysteine 86, and cysteine 68-cysteine 80. The TIL domain maps to 28–86 (CRDNEVFDNCISNCGPPRCSNILNTYPCTNLGPLCTPGCKCKDGRVYDNQGRCVLQTEC).

It belongs to the serine protease inhibitor-like (TIL domain-containing) family. In terms of tissue distribution, expressed by the venom gland.

It is found in the secreted. Functionally, serine protease inhibitor. The polypeptide is Venom peptide BmKAPI (Olivierus martensii (Manchurian scorpion)).